The sequence spans 473 residues: H(+)/Cl(-) exchange transporter ClcA (473 aa).

Topologically, residues 1–32 (MKTDTPSLEIPQAARLRRRQLIRQLLERDKTP) are cytoplasmic. The helical transmembrane segment at 33–69 (LAILFMAAVVGTLVGLAAVAFDKGVSWLQNQRMGALV) threads the bilayer. The Periplasmic portion of the chain corresponds to 70–76 (HTADNYP). A helical transmembrane segment spans residues 77 to 100 (LLLTVAFLCSAVLAMFGYFLVRKY). The Selectivity filter part_1 signature appears at 106–110 (GSGIP). Serine 107 provides a ligand contact to chloride. Positions 109–116 (IPEIEGAL) form an intramembrane region, helical. At 117–123 (EDQRPVR) the chain is on the cytoplasmic side. The next 2 membrane-spanning stretches (helical) occupy residues 124–141 (WWRV…TLGG) and 148–166 (EGPT…LDIF). The Selectivity filter part_2 signature appears at 146-150 (GREGP). At 167–176 (RLKGDEARHT) the chain is on the cytoplasmic side. Intramembrane regions (helical) lie at residues 177–189 (LLAT…LAAA) and 193–201 (PLAGILFII). At 202–214 (EEMRPQFRYTLIS) the chain is on the cytoplasmic side. A helical membrane pass occupies residues 215–232 (IKAVFIGVIMSTIMYRIF). Topologically, residues 233–252 (NHEVALIDVGKLSDAPLNTL) are periplasmic. A helical transmembrane segment spans residues 253–281 (WLYLILGIIFGIFGPIFNKWVLGMQDLLH). At 282–287 (RVHGGN) the chain is on the cytoplasmic side. The chain crosses the membrane as a helical span at residues 288 to 309 (ITKWVIMGGAIGGLCGLLGFVA). Topologically, residues 310-329 (PATSGGGFNLIPIATAGNFS) are periplasmic. 2 helical membrane passes run 330-349 (MGML…LCFS) and 355-376 (GIFA…MVAV). The short motif at 355 to 359 (GIFAP) is the Selectivity filter part_3 element. Chloride-binding residues include isoleucine 356 and phenylalanine 357. Residues 377–386 (ELFPQYHLEA) lie on the Periplasmic side of the membrane. The segment at residues 387 to 401 (GTFAIAGMGALLAAS) is an intramembrane region (helical). The note=Loop between two helices intramembrane region spans 402 to 404 (IRA). Positions 405–416 (PLTGIILVLEMT) form an intramembrane region, helical. An intramembrane region (note=Loop between two helices) is located at residues 417 to 421 (DNYQL). Residues 422-438 (ILPMIITGLGATLLAQF) traverse the membrane as a helical segment. Residues 439–473 (TGGKPLYSAILARTLAKQEAEQLARSKAASASENT) lie on the Cytoplasmic side of the membrane. Tyrosine 445 contributes to the chloride binding site.

Belongs to the chloride channel (TC 2.A.49) family. ClcA subfamily. Homodimer.

The protein resides in the cell inner membrane. It catalyses the reaction 2 chloride(in) + H(+)(out) = 2 chloride(out) + H(+)(in). In terms of biological role, proton-coupled chloride transporter. Functions as antiport system and exchanges two chloride ions for 1 proton. Probably acts as an electrical shunt for an outwardly-directed proton pump that is linked to amino acid decarboxylation, as part of the extreme acid resistance (XAR) response. The polypeptide is H(+)/Cl(-) exchange transporter ClcA (Escherichia fergusonii (strain ATCC 35469 / DSM 13698 / CCUG 18766 / IAM 14443 / JCM 21226 / LMG 7866 / NBRC 102419 / NCTC 12128 / CDC 0568-73)).